A 764-amino-acid polypeptide reads, in one-letter code: Complement factor B (764 aa).

A signal peptide spans 1 to 25; the sequence is MGSNLSPQLCLMPFILGLLSGGVTT. 3 Sushi domains span residues 35–100, 101–160, and 163–220; these read GSCS…ECRA, IHCP…ICDN, and GYCS…SCQD. 6 cysteine pairs are disulfide-bonded: Cys37-Cys76, Cys62-Cys98, Cys103-Cys145, Cys131-Cys158, Cys165-Cys205, and Cys191-Cys218. 2 N-linked (GlcNAc...) asparagine glycosylation sites follow: Asn122 and Asn142. A VWFA domain is found at 270–469; the sequence is NIYLVLDGSD…NLEDVFYQMI (200 aa). Mg(2+) contacts are provided by Ser278 and Ser280. Mn(2+) contacts are provided by Ser278 and Ser280. Asn285 carries N-linked (GlcNAc...) asparagine glycosylation. Lys291 is a glycosylation site (N-linked (Glc) (glycation) lysine). Mg(2+) is bound at residue Thr353. A Mn(2+)-binding site is contributed by Thr353. Residue Asn378 is glycosylated (N-linked (GlcNAc...) asparagine). The 281-residue stretch at 477–757 folds into the Peptidase S1 domain; the sequence is LCGMVWEHRK…VLPWLKEKLQ (281 aa). Disulfide bonds link Cys478-Cys596, Cys511-Cys527, Cys599-Cys615, Cys656-Cys682, and Cys695-Cys725. Active-site charge relay system residues include His526 and Asp576. Ser699 serves as the catalytic Charge relay system.

This sequence belongs to the peptidase S1 family. Monomer. Interacts with complement C3b; this interaction is dependent on the presence of Mg(2+). In terms of assembly, catalytic component of the C3 convertase of the alternative complement pathway, also named C3bBb, composed of complement factor B Bb and complement C3b. Catalytic component of the C5 convertase of the alternative complement pathway, also named C3bBb3b, composed of complement factor B Bb and additional molecules of complement C3b. Interacts to CFP; this interaction contributes to the stabilization of the active C3-convertase enzyme complex. Requires Mg(2+) as cofactor. Mn(2+) serves as cofactor. In terms of processing, cleaved by CFD following activation of the alternative complement system, generating Ba and Bb chains. Cleavage and activation takes place when CFB is already associated with complement C3b.

The protein resides in the secreted. The protein localises to the cell surface. It catalyses the reaction Cleavage of Arg-|-Ser bond in complement component C3 alpha-chain to yield C3a and C3b, and Arg-|-Xaa bond in complement component C5 alpha-chain to yield C5a and C5b.. Precursor of the catalytic component of the C3 and C5 convertase complexes of the alternative pathway of the complement system, a cascade of proteins that leads to phagocytosis and breakdown of pathogens and signaling that strengthens the adaptive immune system. The alternative complement pathway acts as an amplification loop that enhances other complement pathways (classical, lectin and GZMK) by promoting formation of additional C3 and C5 convertases. CFB is cleaved and activated by CFD to generate Ba and Bb chains; Bb chain constituting the catalytic component of the C3 and C5 convertases. Its function is as follows. Serine protease component of the complement C3 and C5 convertase complexes of the alternative complement pathway. Following cleavage and activation by factor D (CFD), forms the C3 convertase together with complement C3b. As part of the C3 convertase, cleaves and activates C3 into C3a anaphylatoxin and C3b opsonin, the next components of the complement pathways. When an additional complement C3b molecule binds to the C3 convertase, forms the C5 convertase, which cleaves and activates C5 into C5a anaphylatoxin and C5b component of the membrane attack complex. In terms of biological role, involved in proliferation and differentiation of preactivated B-lymphocytes, rapid spreading of peripheral blood monocytes, stimulation of lymphocyte blastogenesis and lysis of erythrocytes. The polypeptide is Complement factor B (Homo sapiens (Human)).